Here is a 754-residue protein sequence, read N- to C-terminus: Nitrate reductase (754 aa).

The segment at residues 1-31 is a signal peptide (tat-type signal); it reads MKFTRRSFVKASALATAMVAAGCSPQPVAPK. The 57-residue stretch at 39 to 95 folds into the 4Fe-4S Mo/W bis-MGD-type domain; the sequence is ATWYKTVCRYCGVGCGVMVAAKDNRVVAVKGDTENPVNKGLLCVKGYYLDRIMNTEE. [4Fe-4S] cluster is bound by residues Cys46, Cys49, Cys53, and Cys81. Mo-bis(molybdopterin guanine dinucleotide)-binding positions include Lys83, Gln144, Asn169, Cys173, 256–258, Met341, Gln345, Asn451, Lys497, Asp524, 642–651, Asn728, and Lys745; these read GTD and TGRILEHWHT.

Belongs to the prokaryotic molybdopterin-containing oxidoreductase family. NasA/NapA/NarB subfamily. Component of the nitrate reductase NapAB complex composed of NapA and NapB. It depends on [4Fe-4S] cluster as a cofactor. Mo-bis(molybdopterin guanine dinucleotide) is required as a cofactor. In terms of processing, predicted to be exported by the Tat system. The position of the signal peptide cleavage has not been experimentally proven.

The protein localises to the secreted. The enzyme catalyses 2 Fe(II)-[cytochrome] + nitrate + 2 H(+) = 2 Fe(III)-[cytochrome] + nitrite + H2O. Catalytic subunit of the nitrate reductase complex NapAB. Receives electrons from NapB and catalyzes the reduction of nitrate to nitrite. The protein is Nitrate reductase of Symbiobacterium thermophilum (strain DSM 24528 / JCM 14929 / IAM 14863 / T).